Reading from the N-terminus, the 501-residue chain is Dipeptide and tripeptide permease A (501 aa).

Topologically, residues 1–34 are cytoplasmic; that stretch reads MSTANNNQPESISMNAFKQPKAFYLIFSIELWER. The chain crosses the membrane as a helical span at residues 35 to 55; that stretch reads FGYYGLQGIMAVYLVKMLGMS. Residues 56-59 lie on the Periplasmic side of the membrane; sequence EADS. The chain crosses the membrane as a helical span at residues 60–80; it reads ITLFSSFSALVYGFVAIGGWL. The Cytoplasmic segment spans residues 81 to 89; sequence GDKVLGAKR. A run of 2 helical transmembrane segments spans residues 90–110 and 111–131; these read VIVL…YSGH and EIFW…LFKA. Over 132 to 153 the chain is Periplasmic; the sequence is NPSSLLSTCYSKDDPRLDGAFT. Residues 154-174 traverse the membrane as a helical segment; it reads MYYMSINIGSFFSMLATPWLA. At 175-178 the chain is on the cytoplasmic side; sequence AKYG. Residues 179-199 traverse the membrane as a helical segment; the sequence is WSVAFSLSVVGMLITLVNFWF. The Periplasmic segment spans residues 200-220; sequence CRKWVKNQGSKPDFLPLQFKK. A helical membrane pass occupies residues 221–241; sequence LLMVLVGIIALITLSNWLLHN. Over 242-246 the chain is Cytoplasmic; sequence QIIAR. The helical transmembrane segment at 247–267 threads the bilayer; sequence WALALVSLGIIFIFTKETLFL. Over 268-274 the chain is Periplasmic; sequence QGIARRR. The chain crosses the membrane as a helical span at residues 275-295; sequence MIVAFLLMLEAVIFFVLYSQM. Residues 296–320 lie on the Cytoplasmic side of the membrane; the sequence is PTSLNFFAIHNVEHSIFGIGFEPEQ. Residues 321–341 form a helical membrane-spanning segment; the sequence is FQALNPFWIMLASPILAAIYN. Over 342–352 the chain is Periplasmic; the sequence is KMGDRLPMPHK. The chain crosses the membrane as a helical span at residues 353–373; that stretch reads FAFGMMLCSAAFLVLPWGASF. The Cytoplasmic portion of the chain corresponds to 374–383; the sequence is ANEHGIVSVN. The chain crosses the membrane as a helical span at residues 384–404; that stretch reads WLILSYALQSIGELMISGLGL. At 405 to 414 the chain is on the periplasmic side; it reads AMVAQLVPQR. The helical transmembrane segment at 415 to 435 threads the bilayer; it reads LMGFIMGSWFLTTAAAALIAG. At 436 to 460 the chain is on the cytoplasmic side; it reads KVAALTAVPSDAITDAHASLAIYSH. A helical transmembrane segment spans residues 461 to 481; the sequence is VFMQIGIVTAIIAVLMMLTAP. The Periplasmic portion of the chain corresponds to 482-501; the sequence is KLYRMTLAPSDHNDVKIMTQ.

The protein belongs to the major facilitator superfamily. Proton-dependent oligopeptide transporter (POT/PTR) (TC 2.A.17) family. DtpA subfamily.

It localises to the cell inner membrane. Proton-dependent permease that transports di- and tripeptides. This is Dipeptide and tripeptide permease A from Yersinia pestis.